An 89-amino-acid chain; its full sequence is Small ribosomal subunit protein uS15 (89 aa).

It belongs to the universal ribosomal protein uS15 family. Part of the 30S ribosomal subunit. Forms a bridge to the 50S subunit in the 70S ribosome, contacting the 23S rRNA.

In terms of biological role, one of the primary rRNA binding proteins, it binds directly to 16S rRNA where it helps nucleate assembly of the platform of the 30S subunit by binding and bridging several RNA helices of the 16S rRNA. Its function is as follows. Forms an intersubunit bridge (bridge B4) with the 23S rRNA of the 50S subunit in the ribosome. The sequence is that of Small ribosomal subunit protein uS15 from Buchnera aphidicola subsp. Schizaphis graminum (strain Sg).